Here is a 195-residue protein sequence, read N- to C-terminus: Imidazoleglycerol-phosphate dehydratase (195 aa).

It belongs to the imidazoleglycerol-phosphate dehydratase family.

The protein localises to the cytoplasm. The catalysed reaction is D-erythro-1-(imidazol-4-yl)glycerol 3-phosphate = 3-(imidazol-4-yl)-2-oxopropyl phosphate + H2O. It participates in amino-acid biosynthesis; L-histidine biosynthesis; L-histidine from 5-phospho-alpha-D-ribose 1-diphosphate: step 6/9. This Roseobacter denitrificans (strain ATCC 33942 / OCh 114) (Erythrobacter sp. (strain OCh 114)) protein is Imidazoleglycerol-phosphate dehydratase.